The following is a 284-amino-acid chain: MNRLQLYFRLVRLNKPIGILLLLWPTLWALWLASDGKPDWTLLAIFTLGTILMRSAGCAINDYADRDFDKYVQRTVDRPVTSGKIQPREALLVALALALLSFALIWPLNTLTKQLSIAAVIIAGTYPYFKRFFAIPQAYLGIAFGFGIPMGFAAVQNTVPAAAWWLLVANVFWAVAYDTEYAMVDREDDLKLGMKTSAITFGRHDVAAVMFCYAVTLGLIFIVGWQYGLRTWFAAGMLIATGCAIYHYTLIRARERAGCFAAFRHNNWLGAAIFGGVVLDYLIR.

8 consecutive transmembrane segments (helical) span residues 16 to 36 (PIGI…ASDG), 40 to 60 (WTLL…GCAI), 91 to 111 (LLVA…LNTL), 132 to 152 (FFAI…PMGF), 157 to 177 (NTVP…AVAY), 206 to 226 (VAAV…VGWQ), 231 to 251 (TWFA…YTLI), and 259 to 279 (CFAA…GVVL).

Belongs to the UbiA prenyltransferase family. It depends on Mg(2+) as a cofactor.

It localises to the cell inner membrane. It catalyses the reaction all-trans-octaprenyl diphosphate + 4-hydroxybenzoate = 4-hydroxy-3-(all-trans-octaprenyl)benzoate + diphosphate. Its pathway is cofactor biosynthesis; ubiquinone biosynthesis. Its function is as follows. Catalyzes the prenylation of para-hydroxybenzoate (PHB) with an all-trans polyprenyl group. Mediates the second step in the final reaction sequence of ubiquinone-8 (UQ-8) biosynthesis, which is the condensation of the polyisoprenoid side chain with PHB, generating the first membrane-bound Q intermediate 3-octaprenyl-4-hydroxybenzoate. The chain is 4-hydroxybenzoate octaprenyltransferase from Herminiimonas arsenicoxydans.